The chain runs to 2350 residues: Probable JmjC domain-containing histone demethylation protein 2C (2350 aa).

Disordered stretches follow at residues 96–302 (TRAQ…LQEC) and 314–336 (PKDR…NDTH). Positions 98-127 (AQANSPRPAMNSQAAVPKQNTHQQQQQRSI) are enriched in polar residues. A phosphoserine mark is found at Ser135 and Ser138. Residues 141 to 160 (DEEKMKEDKYDCVSRGENPK) are compositionally biased toward basic and acidic residues. The segment covering 161–171 (GKNKHVVTKRR) has biased composition (basic residues). Residues 172-189 (KPEEAEKRLSMKRLRTDN) are compositionally biased toward basic and acidic residues. Residues 190–200 (ASDASESSDAE) show a composition bias toward low complexity. Phosphoserine occurs at positions 191 and 194. Positions 257 to 280 (QEDKNHNEGEKPKSTDSHLQDKMT) are enriched in basic and acidic residues. Residues 281 to 302 (LRSSEQATVADHNSNDSVLQEC) show a composition bias toward polar residues. 2 positions are modified to phosphoserine: Ser294 and Ser320. The residue at position 324 (Thr324) is a Phosphothreonine. Ser420, Ser436, Ser457, Ser458, Ser460, Ser471, and Ser762 each carry phosphoserine. Disordered stretches follow at residues 426–486 (SVTE…NSQA), 747–766 (SSAE…PPLT), 859–883 (RENY…DKDV), 1030–1083 (RKES…DQSL), and 1422–1508 (EKVS…VPRS). Low complexity-rich tracts occupy residues 863-874 (SRVVPSSSSPKS) and 1034-1045 (SYSSLSPPTLTP). Residues 1071–1083 (SQSNFKNSSDQSL) show a composition bias toward polar residues. Positions 1454–1463 (KRQPKPTYKK) are enriched in basic residues. The span at 1464–1480 (KQNDLQKRKGEVEEDSK) shows a compositional bias: basic and acidic residues. A C6-type zinc finger spans residues 1657–1682 (CDACEATLFNVHWVCRKCGFVACLDC). Positions 1776–1818 (KTSVSLPESQQQNSPQKSQTNGNSSPGSASTDSRLTPPESQSP) are enriched in polar residues. The segment at 1776-1874 (KTSVSLPESQ…PASQSNEQGS (99 aa)) is disordered. Ser1800 carries the post-translational modification Phosphoserine. Basic and acidic residues predominate over residues 1826 to 1849 (AEQKSREEKQENKEFTLEREIKED). Polar residues predominate over residues 1855-1874 (SDSPNGSTSPPASQSNEQGS). The LXXLL motif signature appears at 1876–1880 (LRDLL). Residues 1933–1962 (PNKTSKINIKSEPNEEPKESSLPATDESNK) form a disordered region. Lys1942 is covalently cross-linked (Glycyl lysine isopeptide (Lys-Gly) (interchain with G-Cter in SUMO2)). The 225-residue stretch at 2084–2308 (MPTRYEDFLR…QSFHLTQELR (225 aa)) folds into the JmjC domain. 3 residues coordinate Fe cation: His2146, Glu2148, and His2276.

This sequence belongs to the JHDM2 histone demethylase family. Fe(2+) serves as cofactor.

It localises to the nucleus. In terms of biological role, probable histone demethylase that specifically demethylates 'Lys-9' of histone H3, thereby playing a central role in histone code. Demethylation of Lys residue generates formaldehyde and succinate. May be involved in hormone-dependent transcriptional activation, by participating in recruitment to androgen-receptor target genes. This chain is Probable JmjC domain-containing histone demethylation protein 2C (Jmjd1c), found in Mus musculus (Mouse).